We begin with the raw amino-acid sequence, 208 residues long: Protein-L-isoaspartate O-methyltransferase (208 aa).

The active site involves Ser59.

It belongs to the methyltransferase superfamily. L-isoaspartyl/D-aspartyl protein methyltransferase family.

The protein resides in the cytoplasm. The catalysed reaction is [protein]-L-isoaspartate + S-adenosyl-L-methionine = [protein]-L-isoaspartate alpha-methyl ester + S-adenosyl-L-homocysteine. Catalyzes the methyl esterification of L-isoaspartyl residues in peptides and proteins that result from spontaneous decomposition of normal L-aspartyl and L-asparaginyl residues. It plays a role in the repair and/or degradation of damaged proteins. This Vibrio vulnificus (strain CMCP6) protein is Protein-L-isoaspartate O-methyltransferase.